A 733-amino-acid chain; its full sequence is Phosphoribosylformylglycinamidine synthase subunit PurL (733 aa).

His44 is an active-site residue. ATP contacts are provided by Tyr47 and Lys86. Glu88 serves as a coordination point for Mg(2+). Residues 89–92 (SHNH) and Arg111 contribute to the substrate site. His90 functions as the Proton acceptor in the catalytic mechanism. Asp112 contributes to the Mg(2+) binding site. Gln240 lines the substrate pocket. Asp268 lines the Mg(2+) pocket. 312 to 314 (ESQ) lines the substrate pocket. ATP-binding residues include Asp496 and Gly533. Asn534 lines the Mg(2+) pocket. Residue Ser536 coordinates substrate.

It belongs to the FGAMS family. In terms of assembly, monomer. Part of the FGAM synthase complex composed of 1 PurL, 1 PurQ and 2 PurS subunits.

The protein localises to the cytoplasm. The catalysed reaction is N(2)-formyl-N(1)-(5-phospho-beta-D-ribosyl)glycinamide + L-glutamine + ATP + H2O = 2-formamido-N(1)-(5-O-phospho-beta-D-ribosyl)acetamidine + L-glutamate + ADP + phosphate + H(+). It functions in the pathway purine metabolism; IMP biosynthesis via de novo pathway; 5-amino-1-(5-phospho-D-ribosyl)imidazole from N(2)-formyl-N(1)-(5-phospho-D-ribosyl)glycinamide: step 1/2. In terms of biological role, part of the phosphoribosylformylglycinamidine synthase complex involved in the purines biosynthetic pathway. Catalyzes the ATP-dependent conversion of formylglycinamide ribonucleotide (FGAR) and glutamine to yield formylglycinamidine ribonucleotide (FGAM) and glutamate. The FGAM synthase complex is composed of three subunits. PurQ produces an ammonia molecule by converting glutamine to glutamate. PurL transfers the ammonia molecule to FGAR to form FGAM in an ATP-dependent manner. PurS interacts with PurQ and PurL and is thought to assist in the transfer of the ammonia molecule from PurQ to PurL. This chain is Phosphoribosylformylglycinamidine synthase subunit PurL, found in Wolinella succinogenes (strain ATCC 29543 / DSM 1740 / CCUG 13145 / JCM 31913 / LMG 7466 / NCTC 11488 / FDC 602W) (Vibrio succinogenes).